The following is a 499-amino-acid chain: Glucosylglycerol-phosphate synthase (499 aa).

This sequence belongs to the glycosyltransferase 20 family. As to quaternary structure, interacts with GGP-P. In terms of processing, seems to be degraded, at least in vitro, by FtsH2. In an ftsH2 disruption strain inactive GGPS accumulates.

The protein localises to the cytoplasm. It catalyses the reaction ADP-alpha-D-glucose + sn-glycerol 3-phosphate = 2-O-(alpha-D-glucopyranosyl)-sn-glycerol 3-phosphate + ADP + H(+). It functions in the pathway glycan metabolism; glucosylglycerol biosynthesis. Its function is as follows. Involved in salt tolerance by producing GG-phosphate from ADP-glucose and glycerol-3-phosphate (G3P), an intermediate in the synthesis of the osmolyte glucosylglycerol (GG). The sequence is that of Glucosylglycerol-phosphate synthase (ggpS) from Synechocystis sp. (strain ATCC 27184 / PCC 6803 / Kazusa).